Here is a 420-residue protein sequence, read N- to C-terminus: Protein PEA2 (420 aa).

The span at Leu132 to Gly153 shows a compositional bias: polar residues. Positions Leu132–Asp169 are disordered. Over residues Lys157–Asp169 the composition is skewed to basic and acidic residues. A Phosphoserine modification is found at Ser230. A disordered region spans residues Asn323–Ile363. Positions Ser325 to Val339 are enriched in polar residues. Over residues Pro343 to Ser362 the composition is skewed to low complexity.

Its function is as follows. Localized to sites of polarized growth and is required for efficient mating and bipolar budding. The sequence is that of Protein PEA2 (PEA2) from Saccharomyces cerevisiae (strain ATCC 204508 / S288c) (Baker's yeast).